A 98-amino-acid polypeptide reads, in one-letter code: Putative septation protein SpoVG (98 aa).

It belongs to the SpoVG family.

Its function is as follows. Essential for sporulation. Interferes with or is a negative regulator of the pathway leading to asymmetric septation. This is Putative septation protein SpoVG from Bacillus pumilus (strain SAFR-032).